The chain runs to 239 residues: Phosphoribosylaminoimidazole-succinocarboxamide synthase (239 aa).

Belongs to the SAICAR synthetase family.

The enzyme catalyses 5-amino-1-(5-phospho-D-ribosyl)imidazole-4-carboxylate + L-aspartate + ATP = (2S)-2-[5-amino-1-(5-phospho-beta-D-ribosyl)imidazole-4-carboxamido]succinate + ADP + phosphate + 2 H(+). It participates in purine metabolism; IMP biosynthesis via de novo pathway; 5-amino-1-(5-phospho-D-ribosyl)imidazole-4-carboxamide from 5-amino-1-(5-phospho-D-ribosyl)imidazole-4-carboxylate: step 1/2. The chain is Phosphoribosylaminoimidazole-succinocarboxamide synthase from Bacillus cytotoxicus (strain DSM 22905 / CIP 110041 / 391-98 / NVH 391-98).